A 1174-amino-acid polypeptide reads, in one-letter code: MANVEETVANVQRKIDREKALINAANAMRQSTNNPAVLSRLDGQIKDGRRNIDYFESKLRDLDLQRTTSGVDNMSLQPGRSPTNPLTPPPKDNWDGYAQQDQGGYGGPQSQYSQLSGGEALQPPRAPFAAPPPATANKRPNYSKLDLIKYDTPHLGPRIQLMLTQLEFKLSVEKQYKDGIEKMVRLYQMEGDRKSKQDAEAKRIESNQKIQLLKHSLKRYEDLHVDIDGDGDDNDSLDIPSQRKPLSGQLSLRIHAVADVDHAATGRFSRGPETFVNIKVEDTIKGRTKPTRNDRWTDEVHDFSIDKANEIEITVYDKTGDHLLPIGMLWVRISDIAEEMRRKKLETELANSGWVAADKMGGHTGIQPDMQFQPPPGQSPAGGPGGGPTPAGVRPPGAPQPQTGPIMIDDWFSLEPVGRIHLTMSFIKNTGNKQPFDLGLGRKGAVRQRKEDVVEQYGHKFVQQQFYNVMRCALCAEFLKYAAGMQCSDCNYTCHKKCYPKVVTKCITQSNAETDPDEAKLNHRIPHRFENFSNMGANWCCHCGYVLPLGRKQTKKCNECGLTCHAHCVHFVPDFCGMSMEVANQILMEIKRTRRGQSSSGPGMSQRTLRPQSAAKPLPPTQPQSPGQPGQESPTQSDRYSYGKEQMSPPPGPPRQPSYPSSATSVDAARASYSTTGTASTGAPTSPTSGSRPPSGPRTQSSVAAAAAAMNKATQPGYGRSNTDYSPQSGRSSGSGYPTEQRMSQQQAPQPAAYDPSVYANIPSYPPSHQQPAPVPSYPTKSSYPLPQPPPPQSPPQHPQQPTPSQQKMPEQQALTQQPPSAVGEVPGKKVTPAANTQGTGKRIGLDHFNFLAVLGKGNFGKVMLAETKTTKQLYAIKVLKKEFIIENDEVESTRSEKRVFLIANKERHPFLLNLHACFQTETRVYFVMEYISGGDLMLHIQRGQFGTKRAQFYAAEVCLALKYFHENGVIYRDLKLDNIMLTLDGHIKVADYGLCKEEMWYGSTTSTFCGTPEFMAPEILLDKKYGRAVDWWAFGVLIYQMLLQQSPFRGEDEDEIYDAILADEPLYPIHMPRDSVSILQKLLTREPEMRLGSGPTDAQEIMSHAFFRNINWDDIYHKRVQPPFIPQITSPTDTSNFDTEFTSVTPVLTPVQSVLSQAMQEEFRGFSYSADFA.

The region spanning 1–68 (MANVEETVAN…LRDLDLQRTT (68 aa)) is the REM-1 1 domain. Positions 69–84 (SGVDNMSLQPGRSPTN) are enriched in polar residues. Residues 69–140 (SGVDNMSLQP…PPPATANKRP (72 aa)) form a disordered region. A compositionally biased stretch (low complexity) spans 96-123 (GYAQQDQGGYGGPQSQYSQLSGGEALQP). Positions 124–134 (PRAPFAAPPPA) are enriched in pro residues. The region spanning 149-226 (KYDTPHLGPR…LKRYEDLHVD (78 aa)) is the REM-1 2 domain. A C2 domain is found at 229–349 (GDGDDNDSLD…MRRKKLETEL (121 aa)). Residues 358–406 (DKMGGHTGIQPDMQFQPPPGQSPAGGPGGGPTPAGVRPPGAPQPQTGPI) are disordered. Residues 380–389 (PAGGPGGGPT) are compositionally biased toward gly residues. 2 Phorbol-ester/DAG-type zinc fingers span residues 458–506 (GHKF…VTKC) and 526–576 (PHRF…PDFC). The segment at 593–842 (TRRGQSSSGP…PAANTQGTGK (250 aa)) is disordered. Positions 596–611 (GQSSSGPGMSQRTLRP) are enriched in polar residues. Over residues 624 to 636 (QSPGQPGQESPTQ) the composition is skewed to low complexity. Positions 648–657 (SPPPGPPRQP) are enriched in pro residues. Positions 658–709 (SYPSSATSVDAARASYSTTGTASTGAPTSPTSGSRPPSGPRTQSSVAAAAAA) are enriched in low complexity. The segment covering 720–744 (RSNTDYSPQSGRSSGSGYPTEQRMS) has biased composition (polar residues). Positions 786–802 (LPQPPPPQSPPQHPQQP) are enriched in pro residues. A compositionally biased stretch (polar residues) spans 808 to 820 (KMPEQQALTQQPP). A Protein kinase domain is found at 849–1108 (FNFLAVLGKG…AQEIMSHAFF (260 aa)). Residues 855–863 (LGKGNFGKV) and lysine 878 contribute to the ATP site. Catalysis depends on aspartate 974, which acts as the Proton acceptor. Residues 1109–1174 (RNINWDDIYH…RGFSYSADFA (66 aa)) enclose the AGC-kinase C-terminal domain.

Belongs to the protein kinase superfamily. AGC Ser/Thr protein kinase family. PKC subfamily.

The catalysed reaction is L-seryl-[protein] + ATP = O-phospho-L-seryl-[protein] + ADP + H(+). The enzyme catalyses L-threonyl-[protein] + ATP = O-phospho-L-threonyl-[protein] + ADP + H(+). The chain is Protein kinase C-like (PKC1) from Cochliobolus heterostrophus (Southern corn leaf blight fungus).